A 348-amino-acid chain; its full sequence is Ketol-acid reductoisomerase (NADP(+)) (348 aa).

The 179-residue stretch at M1–T179 folds into the KARI N-terminal Rossmann domain. NADP(+) contacts are provided by residues Y22–Q25, R45, S48, S50, and D80–Q83. H105 is a catalytic residue. G131 lines the NADP(+) pocket. In terms of domain architecture, KARI C-terminal knotted spans T180–L325. Positions 188, 192, 224, and 228 each coordinate Mg(2+). S249 contacts substrate. Residues P323–S348 form a disordered region. The segment covering A339–S348 has biased composition (low complexity).

Belongs to the ketol-acid reductoisomerase family. Mg(2+) is required as a cofactor.

The enzyme catalyses (2R)-2,3-dihydroxy-3-methylbutanoate + NADP(+) = (2S)-2-acetolactate + NADPH + H(+). The catalysed reaction is (2R,3R)-2,3-dihydroxy-3-methylpentanoate + NADP(+) = (S)-2-ethyl-2-hydroxy-3-oxobutanoate + NADPH + H(+). Its pathway is amino-acid biosynthesis; L-isoleucine biosynthesis; L-isoleucine from 2-oxobutanoate: step 2/4. The protein operates within amino-acid biosynthesis; L-valine biosynthesis; L-valine from pyruvate: step 2/4. In terms of biological role, involved in the biosynthesis of branched-chain amino acids (BCAA). Catalyzes an alkyl-migration followed by a ketol-acid reduction of (S)-2-acetolactate (S2AL) to yield (R)-2,3-dihydroxy-isovalerate. In the isomerase reaction, S2AL is rearranged via a Mg-dependent methyl migration to produce 3-hydroxy-3-methyl-2-ketobutyrate (HMKB). In the reductase reaction, this 2-ketoacid undergoes a metal-dependent reduction by NADPH to yield (R)-2,3-dihydroxy-isovalerate. The polypeptide is Ketol-acid reductoisomerase (NADP(+)) (Salinibacter ruber (strain DSM 13855 / M31)).